The following is a 443-amino-acid chain: UPF0597 protein Dvul_2496 (443 aa).

Residues 156–178 (GMERAPEADGTLHGGASCEPSAS) are disordered.

The protein belongs to the UPF0597 family.

This is UPF0597 protein Dvul_2496 from Nitratidesulfovibrio vulgaris (strain DP4) (Desulfovibrio vulgaris).